The following is a 141-amino-acid chain: MAKKVANVVKLQIPAGKATPAPPVGPALGQAGINIMGFTKEFNARTADQAGMIIPVVISVYEDRSFDFITKTPPAATLLKKAAGVEHGSGEPNTNKVATVTKDQVKQIAETKMQDLNAADVEAAMRMIEGTARSMGFTVEG.

This sequence belongs to the universal ribosomal protein uL11 family. Part of the ribosomal stalk of the 50S ribosomal subunit. Interacts with L10 and the large rRNA to form the base of the stalk. L10 forms an elongated spine to which L12 dimers bind in a sequential fashion forming a multimeric L10(L12)X complex. One or more lysine residues are methylated.

Forms part of the ribosomal stalk which helps the ribosome interact with GTP-bound translation factors. The sequence is that of Large ribosomal subunit protein uL11 from Levilactobacillus brevis (strain ATCC 367 / BCRC 12310 / CIP 105137 / JCM 1170 / LMG 11437 / NCIMB 947 / NCTC 947) (Lactobacillus brevis).